The primary structure comprises 119 residues: Large ribosomal subunit protein uL24 (119 aa).

It belongs to the universal ribosomal protein uL24 family. In terms of assembly, part of the 50S ribosomal subunit.

In terms of biological role, one of two assembly initiator proteins, it binds directly to the 5'-end of the 23S rRNA, where it nucleates assembly of the 50S subunit. Functionally, one of the proteins that surrounds the polypeptide exit tunnel on the outside of the subunit. The sequence is that of Large ribosomal subunit protein uL24 from Paenarthrobacter aurescens (strain TC1).